We begin with the raw amino-acid sequence, 59 residues long: Embryonic testis differentiation protein (59 aa).

Positions 1–28 (MDEKNPEAVPRPPEQNTELVPPKKSKSK) are disordered.

As to expression, specifically expressed in testis.

This Mus musculus (Mouse) protein is Embryonic testis differentiation protein.